The sequence spans 146 residues: Transcriptional regulator MraZ (146 aa).

SpoVT-AbrB domains follow at residues 7-54 and 83-126; these read HVTN…GPEL and GVYV…DPQA.

Belongs to the MraZ family. In terms of assembly, forms oligomers.

It is found in the cytoplasm. It localises to the nucleoid. In Rhizobium meliloti (strain 1021) (Ensifer meliloti), this protein is Transcriptional regulator MraZ.